A 387-amino-acid chain; its full sequence is Gamma-butyrobetaine dioxygenase (387 aa).

Zn(2+) contacts are provided by C38, C40, C43, and H82. H202, D204, and H347 together coordinate Fe cation. Residue S351 is modified to Phosphoserine.

It belongs to the gamma-BBH/TMLD family. The cofactor is Fe(2+). It depends on L-ascorbate as a cofactor.

Its subcellular location is the cytoplasm. It catalyses the reaction 4-(trimethylamino)butanoate + 2-oxoglutarate + O2 = carnitine + succinate + CO2. It functions in the pathway amine and polyamine biosynthesis; carnitine biosynthesis. Catalyzes the formation of L-carnitine from gamma-butyrobetaine. The protein is Gamma-butyrobetaine dioxygenase (Bbox1) of Mus musculus (Mouse).